Here is a 349-residue protein sequence, read N- to C-terminus: Protein DMR6-LIKE OXYGENASE 1 (349 aa).

Residues 197-296 (HAQHMAFNYY…RLSIPTFYFP (100 aa)) form the Fe2OG dioxygenase domain. Tyr206 is a binding site for 2-oxoglutarate. Positions 221, 223, and 277 each coordinate Fe cation. 2-oxoglutarate-binding residues include Arg287 and Ser289.

It belongs to the iron/ascorbate-dependent oxidoreductase family. L-ascorbate is required as a cofactor. Fe(2+) serves as cofactor.

The enzyme catalyses salicylate + NADH + O2 + H(+) = 2,3-dihydroxybenzoate + NAD(+) + H2O. Its function is as follows. Converts salicylic acid (SA) to both 2,3-dihydroxybenzoic acid (2,3-DHBA) and 2,5-DHBA in vitro but only 2,3-DHBA in vivo. Component of a negative feedback regulation system of SA levels during senescence. Regulates both onset and progression of leaf senescence. Negative regulator of defense against Hyaloperonospora arabidopsidis. (Microbial infection) Confers susceptibility to the downy mildew pathogen Hyaloperonospora arabidopsidis. The chain is Protein DMR6-LIKE OXYGENASE 1 from Arabidopsis thaliana (Mouse-ear cress).